The chain runs to 379 residues: Cinnamyl alcohol dehydrogenase 7 (379 aa).

Residues Met-1–Gln-13 show a composition bias toward low complexity. The interval Met-1 to Arg-21 is disordered. Cys-60 is a Zn(2+) binding site. Ser-62 is a binding site for NADP(+). The Zn(2+) site is built by His-82, Glu-83, Cys-113, Cys-116, Cys-119, Cys-127, and Cys-185. NADP(+) is bound by residues Thr-189, Gly-210–Gly-215, Ser-233–Lys-238, Thr-273, Gly-297, and Ser-320–Met-322.

The protein belongs to the zinc-containing alcohol dehydrogenase family. Homodimer. It depends on Zn(2+) as a cofactor. Expressed in roots, first internodes and panicles. Expressed in the vascular bundles and sclerenchyma cells below the epidermis in leaves and stems.

It carries out the reaction (E)-cinnamyl alcohol + NADP(+) = (E)-cinnamaldehyde + NADPH + H(+). The catalysed reaction is (E)-coniferol + NADP(+) = (E)-coniferaldehyde + NADPH + H(+). The enzyme catalyses (E)-sinapyl alcohol + NADP(+) = (E)-sinapaldehyde + NADPH + H(+). It catalyses the reaction (E)-4-coumaroyl alcohol + NADP(+) = (E)-4-coumaraldehyde + NADPH + H(+). It carries out the reaction (E)-caffeyl alcohol + NADP(+) = (E)-caffeyl aldehyde + NADPH + H(+). Its pathway is aromatic compound metabolism; phenylpropanoid biosynthesis. Its function is as follows. Involved in lignin biosynthesis. May catalyze the final step specific for the production of lignin monomers, like coniferyl alcohol, sinapyl alcohol and 4-coumaryl alcohol. This chain is Cinnamyl alcohol dehydrogenase 7, found in Oryza sativa subsp. japonica (Rice).